The sequence spans 348 residues: Adenosine deaminase (348 aa).

The Zn(2+) site is built by H16 and H18. Substrate-binding residues include H18, D20, and G174. H201 provides a ligand contact to Zn(2+). The Proton donor role is filled by E204. D282 contributes to the Zn(2+) binding site.

It belongs to the metallo-dependent hydrolases superfamily. Adenosine and AMP deaminases family. Adenosine deaminase subfamily. The cofactor is Zn(2+).

The catalysed reaction is adenosine + H2O + H(+) = inosine + NH4(+). It carries out the reaction 2'-deoxyadenosine + H2O + H(+) = 2'-deoxyinosine + NH4(+). Its function is as follows. Catalyzes the hydrolytic deamination of adenosine and 2-deoxyadenosine. In Clostridium kluyveri (strain ATCC 8527 / DSM 555 / NBRC 12016 / NCIMB 10680 / K1), this protein is Adenosine deaminase.